Consider the following 106-residue polypeptide: Iron-sulfur cluster assembly protein CyaY (106 aa).

This sequence belongs to the frataxin family.

Functionally, involved in iron-sulfur (Fe-S) cluster assembly. May act as a regulator of Fe-S biogenesis. The polypeptide is Iron-sulfur cluster assembly protein CyaY (Salmonella agona (strain SL483)).